A 156-amino-acid chain; its full sequence is Small ribosomal subunit protein uS7 (156 aa).

This sequence belongs to the universal ribosomal protein uS7 family. Part of the 30S ribosomal subunit. Contacts proteins S9 and S11.

In terms of biological role, one of the primary rRNA binding proteins, it binds directly to 16S rRNA where it nucleates assembly of the head domain of the 30S subunit. Is located at the subunit interface close to the decoding center, probably blocks exit of the E-site tRNA. In Streptococcus agalactiae serotype Ia (strain ATCC 27591 / A909 / CDC SS700), this protein is Small ribosomal subunit protein uS7.